The sequence spans 242 residues: MARLTYLGHAAFQLEAGGRKILVDPWLSNPKSPVKPEEVEGVDLIVITHSHFDHLGDVGKIAAKNPGAKVLAVYEVADLAAEEIAKETGASKDELFNAGRVIGANIGGPVVLQDLGLKVAFTPATHSSVGVAAGAVIITGEGRVYHAGDTGVTMDMRLVGEIYKPHVALLPIGGHFTMDPVEAAKAVELIRPLVAIPMHYGTFPVLYGDPEEFKKRVEEKCLPTQVRILKPGESYEFDFSKA.

It belongs to the UPF0173 family.

The sequence is that of UPF0173 metal-dependent hydrolase APE_1117 from Aeropyrum pernix (strain ATCC 700893 / DSM 11879 / JCM 9820 / NBRC 100138 / K1).